The sequence spans 360 residues: Peptide chain release factor 1 (360 aa).

N5-methylglutamine is present on Gln-235. The segment covering 284–295 has biased composition (basic and acidic residues); it reads ERQEQAQADTRR. Residues 284 to 309 are disordered; sequence ERQEQAQADTRRNLLGSGDRSDKIRT.

It belongs to the prokaryotic/mitochondrial release factor family. In terms of processing, methylated by PrmC. Methylation increases the termination efficiency of RF1.

It localises to the cytoplasm. Functionally, peptide chain release factor 1 directs the termination of translation in response to the peptide chain termination codons UAG and UAA. The chain is Peptide chain release factor 1 (prfA) from Pasteurella multocida (strain Pm70).